The chain runs to 725 residues: Non-structural protein 4 (725 aa).

Disordered regions lie at residues 1–26 and 666–725; these read MSKG…GNRN and DEVE…TKDE. A compositionally biased stretch (polar residues) spans 7–16; sequence TVTSLVSGPP. Residues 675–686 are compositionally biased toward basic and acidic residues; it reads ENQKQELDAKSD. Residues 687 to 709 are compositionally biased toward acidic residues; sequence DVEESSVEGEEDDDGSSASEETD.

The protein is Non-structural protein 4 of Rice gall dwarf virus (RGDV).